The sequence spans 410 residues: Lissencephaly-1 homolog A (410 aa).

In terms of domain architecture, LisH spans 7-39 (QRDELNRAIADYLRSNGYEEAYSVFKKEAELDM). Residues 56–83 (TSVIRLQKKVMELESKLNEAKEEINIGG) are a coiled coil. 7 WD repeats span residues 106 to 145 (GHRS…FERT), 148 to 187 (GHTD…CIRT), 190 to 229 (GHDH…CVKT), 232 to 271 (GHRE…CKAE), 274 to 333 (EHEH…CLMT), 336 to 375 (GHDN…CTKT), and 378 to 410 (AHEH…WECR).

It belongs to the WD repeat LIS1/nudF family. In terms of assembly, can self-associate. Component of the cytosolic PAF-AH (I) heterotetrameric enzyme, which is composed of PAFAH1B1 (beta), PAFAH1B2 (alpha2) and PAFAH1B3 (alpha1) subunits. The catalytic activity of the enzyme resides in the alpha1 (PAFAH1B3) and alpha2 (PAFAH1B2) subunits, whereas the beta subunit (PAFAH1B1) has regulatory activity. Trimer formation is not essential for the catalytic activity. Interacts with dynein, dynactin, nde1 and ndel1.

The protein resides in the cytoplasm. It localises to the cytoskeleton. Its subcellular location is the microtubule organizing center. It is found in the centrosome. Its function is as follows. Regulatory subunit (beta subunit) of the cytosolic type I platelet-activating factor (PAF) acetylhydrolase (PAF-AH (I)), an enzyme that catalyzes the hydrolyze of the acetyl group at the sn-2 position of PAF and its analogs and participates in PAF inactivation. Regulates the PAF-AH (I) activity in a catalytic dimer composition-dependent manner. Positively regulates the activity of the minus-end directed microtubule motor protein dynein. May enhance dynein-mediated microtubule sliding by targeting dynein to the microtubule plus end. Required for several dynein- and microtubule-dependent processes such as the maintenance of Golgi integrity, the peripheral transport of microtubule fragments and the coupling of the nucleus and centrosome. May be required for proliferation of neuronal precursors and neuronal migration. The polypeptide is Lissencephaly-1 homolog A (pafah1b1a) (Danio rerio (Zebrafish)).